A 316-amino-acid polypeptide reads, in one-letter code: N-acetylmuramic acid 6-phosphate etherase (316 aa).

Residues 68–231 (ITDRLRSGGR…STCAMVRLGK (164 aa)) enclose the SIS domain. Catalysis depends on Glu96, which acts as the Proton donor. Glu127 is an active-site residue.

Belongs to the GCKR-like family. MurNAc-6-P etherase subfamily. Homodimer.

It catalyses the reaction N-acetyl-D-muramate 6-phosphate + H2O = N-acetyl-D-glucosamine 6-phosphate + (R)-lactate. It functions in the pathway amino-sugar metabolism; N-acetylmuramate degradation. In terms of biological role, specifically catalyzes the cleavage of the D-lactyl ether substituent of MurNAc 6-phosphate, producing GlcNAc 6-phosphate and D-lactate. The chain is N-acetylmuramic acid 6-phosphate etherase from Prochlorococcus marinus (strain MIT 9303).